Here is a 347-residue protein sequence, read N- to C-terminus: Phosphoribosylformylglycinamidine cyclo-ligase (347 aa).

Belongs to the AIR synthase family.

It is found in the cytoplasm. The enzyme catalyses 2-formamido-N(1)-(5-O-phospho-beta-D-ribosyl)acetamidine + ATP = 5-amino-1-(5-phospho-beta-D-ribosyl)imidazole + ADP + phosphate + H(+). It participates in purine metabolism; IMP biosynthesis via de novo pathway; 5-amino-1-(5-phospho-D-ribosyl)imidazole from N(2)-formyl-N(1)-(5-phospho-D-ribosyl)glycinamide: step 2/2. In Yersinia pseudotuberculosis serotype O:1b (strain IP 31758), this protein is Phosphoribosylformylglycinamidine cyclo-ligase.